The following is a 37-amino-acid chain: Protein YnaM (37 aa).

Residues 4–24 (ILIITSLLIIFSIFSHALIKL) form a helical membrane-spanning segment.

It localises to the cell inner membrane. The polypeptide is Protein YnaM (Escherichia coli (strain K12)).